A 259-amino-acid polypeptide reads, in one-letter code: UPF0014 membrane protein slr1647 (259 aa).

The next 7 helical transmembrane spans lie at 4-24, 34-54, 55-75, 98-118, 128-148, 195-215, and 225-245; these read ALIE…GAAI, LTGQ…VVGY, FLAV…LAIM, LWLS…VVII, YLIP…SLAG, MMVV…LAGG, and ILIM…VTAT.

This sequence belongs to the UPF0014 family.

The protein resides in the cell membrane. This is UPF0014 membrane protein slr1647 from Synechocystis sp. (strain ATCC 27184 / PCC 6803 / Kazusa).